Reading from the N-terminus, the 87-residue chain is Phospholemman (87 aa).

An N-terminal signal peptide occupies residues 1–20 (MASLSHILVLWVGILTVVNA). The Extracellular portion of the chain corresponds to 21-35 (EAPQEHDPFTYDYQS). Residues 36-56 (LRIGGLIIAGILFILGILIVL) traverse the membrane as a helical segment. The Cytoplasmic segment spans residues 57–87 (SRRCRCKFNQQQSLGKMRSPHLAAQFSSESC). The S-palmitoyl cysteine moiety is linked to residue C60. C62 is subject to S-glutathionyl cysteine; alternate. C62 carries S-palmitoyl cysteine; alternate lipidation. At S75 the chain carries Phosphoserine; by PKA and PKC. S83 carries the phosphoserine; by PKA modification.

It belongs to the FXYD family. As to quaternary structure, homotetramer. Monomer. Regulatory subunit of the sodium/potassium-transporting ATPase (NKA) which is composed of a catalytic alpha subunit, a non-catalytic beta subunit and an additional regulatory subunit. The monomeric form associates with NKA while the oligomeric form does not. Interacts with the catalytic alpha-1 subunit ATP1A1. Also interacts with the catalytic alpha-2 and alpha-3 subunits ATP1A2 and ATP1A3. Very little interaction with ATP1A1, ATP1A2 or ATP1A3 when phosphorylated at Ser-83. Interacts with the non-catalytic beta-1 subunit ATP1B1. Oxidative stress decreases interaction with ATP1A1 but increases interaction with ATP1B1. Post-translationally, major plasma membrane substrate for cAMP-dependent protein kinase (PKA) and protein kinase C (PKC) in several different tissues. Phosphorylated in response to insulin and adrenergic stimulation. Phosphorylation at Ser-83 stimulates sodium/potassium-transporting ATPase activity while the unphosphorylated form inhibits sodium/potassium-transporting ATPase activity. Phosphorylation increases tetramerization, decreases binding to ATP1A1 and reduces inhibition of ATP1A1 activity. Phosphorylation at Ser-75 leads to greatly reduced interaction with ATP1A1, ATP1A2 and ATP1A3. May be phosphorylated by DMPK. Palmitoylation increases half-life and stability and is enhanced upon phosphorylation at Ser-83 by PKA.

It localises to the cell membrane. It is found in the sarcolemma. The protein localises to the apical cell membrane. The protein resides in the membrane. Its subcellular location is the caveola. It localises to the T-tubule. Functionally, associates with and regulates the activity of the sodium/potassium-transporting ATPase (NKA) which transports Na(+) out of the cell and K(+) into the cell. Inhibits NKA activity in its unphosphorylated state and stimulates activity when phosphorylated. Reduces glutathionylation of the NKA beta-1 subunit ATP1B1, thus reversing glutathionylation-mediated inhibition of ATP1B1. Contributes to female sexual development by maintaining the excitability of neurons which secrete gonadotropin-releasing hormone. In Sus scrofa (Pig), this protein is Phospholemman.